A 226-amino-acid polypeptide reads, in one-letter code: UPF0758 protein PSEEN5431 (226 aa).

The region spanning 102–224 is the MPN domain; that stretch reads VMDNPLAVRR…PLSMIEHGWL (123 aa). 3 residues coordinate Zn(2+): His173, His175, and Asp186. A JAMM motif motif is present at residues 173–186; the sequence is HNHPSGNCEPSQDD.

The protein belongs to the UPF0758 family.

This is UPF0758 protein PSEEN5431 from Pseudomonas entomophila (strain L48).